The following is a 77-amino-acid chain: DNA-directed RNA polymerase subunit epsilon (77 aa).

Belongs to the RNA polymerase subunit epsilon family. As to quaternary structure, RNAP is composed of a core of 2 alpha, a beta and a beta' subunit. The core is associated with a delta subunit, and at least one of epsilon or omega. When a sigma factor is associated with the core the holoenzyme is formed, which can initiate transcription.

The catalysed reaction is RNA(n) + a ribonucleoside 5'-triphosphate = RNA(n+1) + diphosphate. A non-essential component of RNA polymerase (RNAP). The polypeptide is DNA-directed RNA polymerase subunit epsilon (Streptococcus pneumoniae (strain Hungary19A-6)).